Here is a 451-residue protein sequence, read N- to C-terminus: Cyclin-dependent kinase 14 (451 aa).

S60 and S77 each carry phosphoserine. The interval 84–114 is disordered; that stretch reads NFKTSSTGKESPKVRRHSSPSSPTSPKFGKA. The residue at position 116 (S116) is a Phosphoserine. One can recognise a Protein kinase domain in the interval 117–401; that stretch reads YEKLEKLGEG…AQAALSHEYF (285 aa). Residues 123 to 131 and K146 each bind ATP; that span reads LGEGSYATV. D238 (proton acceptor) is an active-site residue.

It belongs to the protein kinase superfamily. CMGC Ser/Thr protein kinase family. CDC2/CDKX subfamily. As to quaternary structure, found in a complex with LRP6, CCNY and CAPRIN2 during G2/M stage; CAPRIN2 functions as a scaffold for the complex by binding to CCNY via its N terminus and to CDK14 via its C terminus. Interacts with CCNY; CCNY mediates its recruitment to the plasma membrane and promotes phosphorylation of LRP6. Interacts with CCDN3 and CDKN1A. Interacts with SEPT8. Interacts with 14-3-3 proteina YWHAB, YWHAE, YWHAH and YWHAQ.

The protein localises to the cell membrane. Its subcellular location is the cytoplasm. It localises to the nucleus. It catalyses the reaction L-seryl-[protein] + ATP = O-phospho-L-seryl-[protein] + ADP + H(+). The catalysed reaction is L-threonyl-[protein] + ATP = O-phospho-L-threonyl-[protein] + ADP + H(+). With respect to regulation, serine/threonine-protein kinase activity is promoted by associated cyclins CCDN3 and CCNY and repressed by CDKN1A. Serine/threonine-protein kinase involved in the control of the eukaryotic cell cycle, whose activity is controlled by an associated cyclin. Acts as a cell-cycle regulator of Wnt signaling pathway during G2/M phase by mediating the phosphorylation of LRP6 at 'Ser-1490', leading to the activation of the Wnt signaling pathway. Acts as a regulator of cell cycle progression and cell proliferation via its interaction with CCDN3. Phosphorylates RB1 in vitro, however the relevance of such result remains to be confirmed in vivo. May also play a role in meiosis, neuron differentiation and may indirectly act as a negative regulator of insulin-responsive glucose transport. In Plecturocebus moloch (Dusky titi monkey), this protein is Cyclin-dependent kinase 14 (CDK14).